The chain runs to 138 residues: Ribosome-binding factor A (138 aa).

The protein belongs to the RbfA family. Monomer. Binds 30S ribosomal subunits, but not 50S ribosomal subunits or 70S ribosomes.

Its subcellular location is the cytoplasm. Functionally, one of several proteins that assist in the late maturation steps of the functional core of the 30S ribosomal subunit. Associates with free 30S ribosomal subunits (but not with 30S subunits that are part of 70S ribosomes or polysomes). Required for efficient processing of 16S rRNA. May interact with the 5'-terminal helix region of 16S rRNA. This chain is Ribosome-binding factor A, found in Bradyrhizobium sp. (strain BTAi1 / ATCC BAA-1182).